Reading from the N-terminus, the 519-residue chain is C-glycoside 3-oxidase (519 aa).

E41 provides a ligand contact to FAD. Residues 43–93 (GPTVSNPPGAHVKNIEDPERRSHAQRASEGPGAGAETVNSPGAVKSGERRA) are disordered. Residues 55 to 64 (KNIEDPERRS) are compositionally biased toward basic and acidic residues. Residues S118, N120, M124, T129, A131, and V234 each coordinate FAD. H440 serves as the catalytic Proton acceptor. Residues N474 and T486 each contribute to the FAD site.

Belongs to the GMC oxidoreductase family. As to quaternary structure, monomer. It depends on FAD as a cofactor.

It carries out the reaction isovitexin + O2 = 3''-dehydroisovitexin + H2O2. The enzyme catalyses isoorientin + O2 = 3''-dehydroisoorientin + H2O2. It catalyses the reaction mangiferin + O2 = 3'-dehydromangiferin + H2O2. FAD-dependent C-glycoside-metabolizing enzyme that participates in the degradation of certain C-glycosides by catalyzing the oxidation of the hydroxyl group at the C3 position of the sugar moiety. Shows oxidase activity toward various C-glycosides such as isovitexin, isoorientin and mangiferin but cannot use carminic acid, puerarin, orientin or aloesin. Shows weak activity (100 to 1000-fold lower) with O-glycosides. Probably plays a crucial role in the metabolism of C-glycosides in nature. This chain is C-glycoside 3-oxidase, found in Arthrobacter globiformis (strain ATCC 8010 / DSM 20124 / JCM 1332 / NBRC 12137 / NCIMB 8907 / NRRL B-2979 / 168).